The following is a 95-amino-acid chain: Large ribosomal subunit protein bL25 (95 aa).

The protein belongs to the bacterial ribosomal protein bL25 family. Part of the 50S ribosomal subunit; part of the 5S rRNA/L5/L18/L25 subcomplex. Contacts the 5S rRNA. Binds to the 5S rRNA independently of L5 and L18.

In terms of biological role, this is one of the proteins that binds to the 5S RNA in the ribosome where it forms part of the central protuberance. This chain is Large ribosomal subunit protein bL25, found in Shewanella woodyi (strain ATCC 51908 / MS32).